The following is a 609-amino-acid chain: Glutamine--fructose-6-phosphate aminotransferase [isomerizing] (609 aa).

Cys2 functions as the Nucleophile; for GATase activity in the catalytic mechanism. The 216-residue stretch at 2 to 217 (CGIVGAIAGR…EGDTAELRRD (216 aa)) folds into the Glutamine amidotransferase type-2 domain. SIS domains follow at residues 284–425 (TADA…LQGR) and 458–599 (WAER…VDKP). Lys604 acts as the For Fru-6P isomerization activity in catalysis.

As to quaternary structure, homodimer.

The protein resides in the cytoplasm. The enzyme catalyses D-fructose 6-phosphate + L-glutamine = D-glucosamine 6-phosphate + L-glutamate. In terms of biological role, catalyzes the first step in hexosamine metabolism, converting fructose-6P into glucosamine-6P using glutamine as a nitrogen source. This Xanthomonas campestris pv. campestris (strain ATCC 33913 / DSM 3586 / NCPPB 528 / LMG 568 / P 25) protein is Glutamine--fructose-6-phosphate aminotransferase [isomerizing].